The primary structure comprises 1088 residues: Protein argonaute 18 (1088 aa).

The tract at residues 1–220 (MASRGGGQHQ…QPPPDLPQAP (220 aa)) is disordered. 6 stretches are compositionally biased toward gly residues: residues 20 to 30 (GGYGRGGGGGR), 51 to 86 (YPGG…GQGR), 95 to 127 (GRGY…GGYH), 135 to 148 (GRGG…GGGY), 161 to 182 (ARGG…YGRG), and 191 to 206 (GRGG…GGGS). Residues 211–220 (QPPPDLPQAP) are compositionally biased toward pro residues. Residues 477–574 (TVGYFLNNYG…LPMELCNIVP (98 aa)) enclose the PAZ domain. In terms of domain architecture, Piwi spans 747–1056 (LLLVVMTDDK…LAFRARFYLT (310 aa)).

It belongs to the argonaute family. Ago subfamily.

Probably involved in the RNA silencing pathway. May bind to short RNAs such as microRNAs (miRNAs) or short interfering RNAs (siRNAs), and represses the translation of mRNAs which are complementary to them. The protein is Protein argonaute 18 (AGO18) of Oryza sativa subsp. japonica (Rice).